A 254-amino-acid chain; its full sequence is Glc operon transcriptional activator (254 aa).

In terms of domain architecture, HTH gntR-type spans arginine 6–leucine 74. Positions glutamate 34–threonine 53 form a DNA-binding region, H-T-H motif.

Functionally, transcriptional activator of the glcDEFGB operon which is associated with glycolate utilization, and encodes malate synthase G and the genes needed for glycolate oxidase activity. Also negatively regulates the transcription of its own gene. Glycolate acts as an effector, but GlcC can also use acetate as an alternative effector. In Escherichia coli O6:H1 (strain CFT073 / ATCC 700928 / UPEC), this protein is Glc operon transcriptional activator (glcC).